Consider the following 1338-residue polypeptide: Centrosomal P4.1-associated protein (1338 aa).

The tract at residues 190–211 (GLSLLPDDQSQKHRSPGNTTTG) is disordered. Phosphoserine occurs at positions 260 and 316. The interval 319 to 394 (VANIEERPIK…FTNAKSKFQK (76 aa)) is alpha/beta-tubulin binding. Disordered stretches follow at residues 386–414 (TNAK…PLFK), 436–479 (PILK…QTGK), and 521–551 (QGKD…ESES). The span at 400–409 (LVTNQSTSED) shows a compositional bias: polar residues. At Ser-540 the chain carries Phosphoserine. Over residues 541–550 (PIRETMKESE) the composition is skewed to basic and acidic residues. Ser-589 carries the post-translational modification Phosphoserine; by PLK2. Ser-595 carries the phosphoserine; by PLK2 and PLK4 modification. Disordered regions lie at residues 611–789 (HRMS…LSLS), 845–865 (VKRG…TSEL), and 1096–1153 (YLPM…QGEI). Over residues 635-650 (NRSEDLDHTAREKESE) the composition is skewed to basic and acidic residues. Residues 679–689 (QKSTSENQTEW) show a composition bias toward polar residues. Over residues 717–764 (STEDRERGISSREDSPQVCDDKGPFKDTRTQEDKRRDVDLDLSDKDYS) the composition is skewed to basic and acidic residues. Position 759 is a phosphoserine (Ser-759). The interval 895-1338 (QPPGDNARSQ…EGNVLMDTEL (444 aa)) is interaction with STIL. Positions 1140-1149 (YKEEEEDQDI) are enriched in acidic residues.

It belongs to the TCP10 family. In terms of assembly, forms homodimers. Associates with microtubules plus ends; binds to beta-tubulin subunits exposed on microtubule outer surface at its distal tip; also associates with microtubule lattice. Associated with the gamma-tubulin complex. Interacts with the head domain of EPB41. Interacts with LYST. Interacts with CEP152 (via C-terminus). Interacts with STIL. Forms a complex with STIL and SASS6. In terms of processing, phosphorylation at Ser-589 and Ser-595 by PLK2 is required for procentriole formation and centriole elongation. Phosphorylation by PLK2 oscillates during the cell cycle: it increases at G1/S transition and decreases during the exit from mitosis. Phosphorylation at Ser-595 is also mediated by PLK4 but is not a critical step in PLK4 function in procentriole assembly.

The protein resides in the cytoplasm. It is found in the cytoskeleton. Its subcellular location is the microtubule organizing center. The protein localises to the centrosome. It localises to the centriole. In terms of biological role, plays an important role in cell division and centrosome function by participating in centriole duplication. Inhibits microtubule nucleation from the centrosome. Involved in the regulation of slow processive growth of centriolar microtubules. Acts as a microtubule plus-end tracking protein that stabilizes centriolar microtubules and inhibits microtubule polymerization and extension from the distal ends of centrioles. Required for centriole elongation and for STIL-mediated centriole amplification. Required for the recruitment of CEP295 to the proximal end of new-born centrioles at the centriolar microtubule wall during early S phase in a PLK4-dependent manner. May be involved in the control of centriolar-microtubule growth by acting as a regulator of tubulin release. The polypeptide is Centrosomal P4.1-associated protein (Homo sapiens (Human)).